Consider the following 388-residue polypeptide: F-box protein At3g49510 (388 aa).

Positions methionine 1 to threonine 47 constitute an F-box domain.

The chain is F-box protein At3g49510 from Arabidopsis thaliana (Mouse-ear cress).